The primary structure comprises 667 residues: Probable sulfate permease C320.05 (667 aa).

Residues 1-27 are disordered; it reads MSSPSENHLLGPKTSFIDNRTSTSRPL. Residues 16–25 are compositionally biased toward polar residues; sequence FIDNRTSTSR. Helical transmembrane passes span 77–97, 102–122, 162–182, 198–218, 240–260, 275–295, 301–321, 336–356, 368–388, 405–425, 433–453, and 465–485; these read IIWD…IALS, FLGV…ILYC, ILVT…AGLF, GCIL…FFGF, MSKA…LLIG, IVSI…SKKF, YGIA…LPLP, GVMC…AISL, LISL…PICG, VATI…MPVF, LASM…VEIF, and GIIF…GIIF. Residues 532–657 enclose the STAS domain; sequence SSTAVESAPR…DHVQDSIKKV (126 aa).

The protein belongs to the SLC26A/SulP transporter (TC 2.A.53) family.

The protein localises to the endoplasmic reticulum membrane. Functionally, possible sulfate transporter. This is Probable sulfate permease C320.05 from Schizosaccharomyces pombe (strain 972 / ATCC 24843) (Fission yeast).